A 74-amino-acid polypeptide reads, in one-letter code: Exodeoxyribonuclease 7 small subunit (74 aa).

The protein belongs to the XseB family. As to quaternary structure, heterooligomer composed of large and small subunits.

It is found in the cytoplasm. It catalyses the reaction Exonucleolytic cleavage in either 5'- to 3'- or 3'- to 5'-direction to yield nucleoside 5'-phosphates.. Functionally, bidirectionally degrades single-stranded DNA into large acid-insoluble oligonucleotides, which are then degraded further into small acid-soluble oligonucleotides. In Symbiobacterium thermophilum (strain DSM 24528 / JCM 14929 / IAM 14863 / T), this protein is Exodeoxyribonuclease 7 small subunit.